The primary structure comprises 584 residues: 2-succinyl-5-enolpyruvyl-6-hydroxy-3-cyclohexene-1-carboxylate synthase (584 aa).

Belongs to the TPP enzyme family. MenD subfamily. As to quaternary structure, homodimer. The cofactor is Mg(2+). It depends on Mn(2+) as a cofactor. Thiamine diphosphate is required as a cofactor.

The enzyme catalyses isochorismate + 2-oxoglutarate + H(+) = 5-enolpyruvoyl-6-hydroxy-2-succinyl-cyclohex-3-ene-1-carboxylate + CO2. It participates in quinol/quinone metabolism; 1,4-dihydroxy-2-naphthoate biosynthesis; 1,4-dihydroxy-2-naphthoate from chorismate: step 2/7. The protein operates within quinol/quinone metabolism; menaquinone biosynthesis. In terms of biological role, catalyzes the thiamine diphosphate-dependent decarboxylation of 2-oxoglutarate and the subsequent addition of the resulting succinic semialdehyde-thiamine pyrophosphate anion to isochorismate to yield 2-succinyl-5-enolpyruvyl-6-hydroxy-3-cyclohexene-1-carboxylate (SEPHCHC). The protein is 2-succinyl-5-enolpyruvyl-6-hydroxy-3-cyclohexene-1-carboxylate synthase of Bacillus cytotoxicus (strain DSM 22905 / CIP 110041 / 391-98 / NVH 391-98).